Consider the following 346-residue polypeptide: Glycerol-3-phosphate dehydrogenase [NAD(P)+] (346 aa).

NADPH-binding residues include serine 15, tryptophan 16, arginine 36, and lysine 110. Sn-glycerol 3-phosphate is bound by residues lysine 110, glycine 139, and serine 141. Residue alanine 143 participates in NADPH binding. Lysine 194, aspartate 247, serine 257, arginine 258, and asparagine 259 together coordinate sn-glycerol 3-phosphate. Residue lysine 194 is the Proton acceptor of the active site. Residue arginine 258 coordinates NADPH. NADPH contacts are provided by valine 282 and glutamate 284.

This sequence belongs to the NAD-dependent glycerol-3-phosphate dehydrogenase family.

Its subcellular location is the cytoplasm. The catalysed reaction is sn-glycerol 3-phosphate + NAD(+) = dihydroxyacetone phosphate + NADH + H(+). It catalyses the reaction sn-glycerol 3-phosphate + NADP(+) = dihydroxyacetone phosphate + NADPH + H(+). Its pathway is membrane lipid metabolism; glycerophospholipid metabolism. Its function is as follows. Catalyzes the reduction of the glycolytic intermediate dihydroxyacetone phosphate (DHAP) to sn-glycerol 3-phosphate (G3P), the key precursor for phospholipid synthesis. This is Glycerol-3-phosphate dehydrogenase [NAD(P)+] from Xylella fastidiosa (strain Temecula1 / ATCC 700964).